Consider the following 589-residue polypeptide: MKDELALTIANTIINGFERHFAIFTEITQSARNRFQQCQWNEIHRSARARTNFYDERVKETFNDIKEDFNISSLDDALWQRVKAVYSDLLINHKQPELAETFYNSVFCHLFERKYYHNDYIYVESTAHRLDDKTQPEIYTSYQPKELGLKQTICDIMNSHRTVIPFEDLDRDVDALINTFRRKAHKTRVKLEDLKFDILNFTFYRNKGAYLIGRVLSPAGETPFIIAVLNNEKGGLYIDALLTSSESMAVVFGFARAYFFVDCEHPYALVNFLQGLMPHKTKADLYSAIGFHKQGKTQFYRDFLNHLDSSDDQFELAAGIKGMVMSVFTLPSYPYVFKIIKDKFSPSKNITKKDVKGKYRLVKLHDRVGRMADTMEYSEVAFPKSRFNDELLAELQKVAPSIIRYEGEGEEALIIIEHLYIERRMVPLNLYLMDALKNKAQQKIDDALFGYGQAIKQLISADIFPGDMLLKNFGVTRHGRVIFYDYDEIAYMNEINFRVKPKAVTEEQLYAAEPWYSVMPGDMFPEELATFALANPSYLKAFKIHHEDLLTAAYWQQCQQDVANGIYKDVFPYPDKYRFCNLSFGSIKR.

ATP contacts are provided by residues 317–323 and lysine 338; that span reads AAGIKGM. Aspartate 373 is an active-site residue.

It belongs to the AceK family.

Its subcellular location is the cytoplasm. The enzyme catalyses L-seryl-[isocitrate dehydrogenase] + ATP = O-phospho-L-seryl-[isocitrate dehydrogenase] + ADP + H(+). Functionally, bifunctional enzyme which can phosphorylate or dephosphorylate isocitrate dehydrogenase (IDH) on a specific serine residue. This is a regulatory mechanism which enables bacteria to bypass the Krebs cycle via the glyoxylate shunt in response to the source of carbon. When bacteria are grown on glucose, IDH is fully active and unphosphorylated, but when grown on acetate or ethanol, the activity of IDH declines drastically concomitant with its phosphorylation. The chain is Isocitrate dehydrogenase kinase/phosphatase from Colwellia psychrerythraea (strain 34H / ATCC BAA-681) (Vibrio psychroerythus).